The sequence spans 248 residues: 5'-nucleotidase SurE (248 aa).

A divalent metal cation contacts are provided by aspartate 8, aspartate 9, serine 39, and asparagine 91.

This sequence belongs to the SurE nucleotidase family. The cofactor is a divalent metal cation.

Its subcellular location is the cytoplasm. The catalysed reaction is a ribonucleoside 5'-phosphate + H2O = a ribonucleoside + phosphate. In terms of biological role, nucleotidase that shows phosphatase activity on nucleoside 5'-monophosphates. This is 5'-nucleotidase SurE from Marinomonas sp. (strain MWYL1).